The following is a 508-amino-acid chain: 4-trimethylaminobutyraldehyde dehydrogenase A (508 aa).

Residues Lys-194 and 246-250 (GSVPT) contribute to the NAD(+) site. Residue Glu-268 is the Proton acceptor of the active site. Catalysis depends on Cys-302, which acts as the Nucleophile. Glu-405 is an NAD(+) binding site.

It belongs to the aldehyde dehydrogenase family. In terms of assembly, homotetramer.

Its subcellular location is the cytoplasm. The protein resides in the cytosol. The enzyme catalyses 4-(trimethylamino)butanal + NAD(+) + H2O = 4-(trimethylamino)butanoate + NADH + 2 H(+). The catalysed reaction is an aldehyde + NAD(+) + H2O = a carboxylate + NADH + 2 H(+). It participates in amine and polyamine biosynthesis; carnitine biosynthesis. Converts gamma-trimethylaminobutyraldehyde into gamma-butyrobetaine with high efficiency (in vitro). Can catalyze the irreversible oxidation of a broad range of aldehydes to the corresponding acids in an NAD-dependent reaction, but with low efficiency. This Danio rerio (Zebrafish) protein is 4-trimethylaminobutyraldehyde dehydrogenase A (aldh9a1a).